A 340-amino-acid polypeptide reads, in one-letter code: UDP-3-O-(3-hydroxymyristoyl)glucosamine N-acyltransferase (340 aa).

The active-site Proton acceptor is the H239.

It belongs to the transferase hexapeptide repeat family. LpxD subfamily. Homotrimer.

It catalyses the reaction a UDP-3-O-[(3R)-3-hydroxyacyl]-alpha-D-glucosamine + a (3R)-hydroxyacyl-[ACP] = a UDP-2-N,3-O-bis[(3R)-3-hydroxyacyl]-alpha-D-glucosamine + holo-[ACP] + H(+). It carries out the reaction UDP-3-O-[(3R)-3-hydroxytetradecanoyl]-alpha-D-glucosamine + (3R)-hydroxytetradecanoyl-[ACP] = UDP-2-N,3-O-bis[(3R)-3-hydroxytetradecanoyl]-alpha-D-glucosamine + holo-[ACP] + H(+). Its pathway is glycolipid biosynthesis; lipid IV(A) biosynthesis; lipid IV(A) from (3R)-3-hydroxytetradecanoyl-[acyl-carrier-protein] and UDP-N-acetyl-alpha-D-glucosamine: step 3/6. Its function is as follows. Catalyzes the N-acylation of UDP-3-O-(hydroxytetradecanoyl)glucosamine using 3-hydroxytetradecanoyl-ACP as the acyl donor. Is involved in the biosynthesis of lipid A, a phosphorylated glycolipid that anchors the lipopolysaccharide to the outer membrane of the cell. This Sodalis glossinidius (strain morsitans) protein is UDP-3-O-(3-hydroxymyristoyl)glucosamine N-acyltransferase.